The primary structure comprises 182 residues: Crossover junction endodeoxyribonuclease RuvC (182 aa).

Active-site residues include Asp-7, Glu-67, and Asp-139. Mg(2+)-binding residues include Asp-7, Glu-67, and Asp-139.

It belongs to the RuvC family. As to quaternary structure, homodimer which binds Holliday junction (HJ) DNA. The HJ becomes 2-fold symmetrical on binding to RuvC with unstacked arms; it has a different conformation from HJ DNA in complex with RuvA. In the full resolvosome a probable DNA-RuvA(4)-RuvB(12)-RuvC(2) complex forms which resolves the HJ. Mg(2+) is required as a cofactor.

The protein resides in the cytoplasm. The enzyme catalyses Endonucleolytic cleavage at a junction such as a reciprocal single-stranded crossover between two homologous DNA duplexes (Holliday junction).. Its function is as follows. The RuvA-RuvB-RuvC complex processes Holliday junction (HJ) DNA during genetic recombination and DNA repair. Endonuclease that resolves HJ intermediates. Cleaves cruciform DNA by making single-stranded nicks across the HJ at symmetrical positions within the homologous arms, yielding a 5'-phosphate and a 3'-hydroxyl group; requires a central core of homology in the junction. The consensus cleavage sequence is 5'-(A/T)TT(C/G)-3'. Cleavage occurs on the 3'-side of the TT dinucleotide at the point of strand exchange. HJ branch migration catalyzed by RuvA-RuvB allows RuvC to scan DNA until it finds its consensus sequence, where it cleaves and resolves the cruciform DNA. This Bordetella parapertussis (strain 12822 / ATCC BAA-587 / NCTC 13253) protein is Crossover junction endodeoxyribonuclease RuvC.